The sequence spans 349 residues: Thioredoxin reductase, mitochondrial (349 aa).

The transit peptide at 1–30 directs the protein to the mitochondrion; the sequence is MLLVRNSTLGRLSSLRGFFRNINESNIFYR. FAD-binding positions include 41-44, 70-71, glutamine 75, asparagine 84, valine 117, cysteine 175, aspartate 318, and 325-327; these read SGPA, IA, and RQA. Cysteine 172 and cysteine 175 form a disulfide bridge.

Belongs to the class-II pyridine nucleotide-disulfide oxidoreductase family. Homodimer. The cofactor is FAD.

It is found in the mitochondrion. The catalysed reaction is [thioredoxin]-dithiol + NADP(+) = [thioredoxin]-disulfide + NADPH + H(+). The sequence is that of Thioredoxin reductase, mitochondrial (TRR1) from Kluyveromyces lactis (strain ATCC 8585 / CBS 2359 / DSM 70799 / NBRC 1267 / NRRL Y-1140 / WM37) (Yeast).